A 65-amino-acid chain; its full sequence is Large ribosomal subunit protein uL29 (65 aa).

It belongs to the universal ribosomal protein uL29 family.

The chain is Large ribosomal subunit protein uL29 from Buchnera aphidicola subsp. Baizongia pistaciae (strain Bp).